The chain runs to 100 residues: Large ribosomal subunit protein uL23 (100 aa).

The protein belongs to the universal ribosomal protein uL23 family. Part of the 50S ribosomal subunit. Contacts protein L29, and trigger factor when it is bound to the ribosome.

Functionally, one of the early assembly proteins it binds 23S rRNA. One of the proteins that surrounds the polypeptide exit tunnel on the outside of the ribosome. Forms the main docking site for trigger factor binding to the ribosome. In Xylella fastidiosa (strain M23), this protein is Large ribosomal subunit protein uL23.